The sequence spans 375 residues: Growth/differentiation factor 8 (375 aa).

A signal peptide spans 1 to 18; it reads MQRLQICVYIYLFVLIVA. Positions 19–266 are excised as a propeptide; it reads GPVDLSENSE…VTDTPKRSRR (248 aa). An N-linked (GlcNAc...) asparagine glycan is attached at Asn-71. 4 disulfides stabilise this stretch: Cys-272-Cys-282, Cys-281-Cys-340, Cys-309-Cys-372, and Cys-313-Cys-374.

Belongs to the TGF-beta family. As to quaternary structure, homodimer; disulfide-linked. Interacts with WFIKKN2, leading to inhibit its activity. Interacts with FSTL3. In terms of processing, synthesized as large precursor molecule that undergoes proteolytic cleavage to generate an N-terminal propeptide and a disulfide linked C-terminal dimer, which is the biologically active molecule. The circulating form consists of a latent complex of the C-terminal dimer and other proteins, including its propeptide, which maintain the C-terminal dimer in a latent, inactive state. Ligand activation requires additional cleavage of the prodomain by a tolloid-like metalloproteinase.

Its subcellular location is the secreted. Its function is as follows. Acts specifically as a negative regulator of skeletal muscle growth. The protein is Growth/differentiation factor 8 (MSTN) of Canis lupus familiaris (Dog).